A 295-amino-acid polypeptide reads, in one-letter code: Transcriptional regulator SirC (295 aa).

Residues 195 to 292 (EKVYNIIISD…KITPLSFMRT (98 aa)) form the HTH araC/xylS-type domain. DNA-binding regions (H-T-H motif) lie at residues 212-233 (AEVA…AAEE) and 259-282 (ISQV…KRHF).

Its function is as follows. Positive regulator of the expression of the invasion-associated type III secretion system encoded within SPI-1 (pathogenicity island 1). The chain is Transcriptional regulator SirC (sirC) from Salmonella typhimurium (strain SL1344).